The primary structure comprises 302 residues: Large ribosomal subunit protein uL18 (302 aa).

It belongs to the universal ribosomal protein uL18 family. As to quaternary structure, component of the large ribosomal subunit (LSU).

The protein resides in the cytoplasm. It is found in the nucleus. Functionally, component of the ribosome, a large ribonucleoprotein complex responsible for the synthesis of proteins in the cell. The small ribosomal subunit (SSU) binds messenger RNAs (mRNAs) and translates the encoded message by selecting cognate aminoacyl-transfer RNA (tRNA) molecules. The large subunit (LSU) contains the ribosomal catalytic site termed the peptidyl transferase center (PTC), which catalyzes the formation of peptide bonds, thereby polymerizing the amino acids delivered by tRNAs into a polypeptide chain. The nascent polypeptides leave the ribosome through a tunnel in the LSU and interact with protein factors that function in enzymatic processing, targeting, and the membrane insertion of nascent chains at the exit of the ribosomal tunnel. In Cucumis sativus (Cucumber), this protein is Large ribosomal subunit protein uL18 (RPL5).